The chain runs to 161 residues: Protein-export protein SecB (161 aa).

It belongs to the SecB family. Homotetramer, a dimer of dimers. One homotetramer interacts with 1 SecA dimer.

The protein localises to the cytoplasm. One of the proteins required for the normal export of preproteins out of the cell cytoplasm. It is a molecular chaperone that binds to a subset of precursor proteins, maintaining them in a translocation-competent state. It also specifically binds to its receptor SecA. In Methylocella silvestris (strain DSM 15510 / CIP 108128 / LMG 27833 / NCIMB 13906 / BL2), this protein is Protein-export protein SecB.